The primary structure comprises 558 residues: SPATS2-like protein (558 aa).

Alanine 2 is subject to N-acetylalanine. Positions 63–79 (GKKKNNKRKRSKSKQHQ) are enriched in basic residues. Residues 63 to 204 (GKKKNNKRKR…SPVKSNAPAA (142 aa)) are disordered. Composition is skewed to basic and acidic residues over residues 80–92 (GNKDAKDKVERPE) and 110–142 (GCEKDSSSPDSTREKLALTPREKKISILEEPPR). Serine 120 carries the post-translational modification Phosphoserine. The stretch at 279–344 (KEEAMDILTA…ARFSCDIEQL (66 aa)) forms a coiled coil. Disordered regions lie at residues 385-406 (GNFARKSSGHNKPSEGKAANPK) and 421-514 (TMPT…RQHA). Residues 421-433 (TMPTNKQQNGPSS) show a composition bias toward polar residues. Residues 469–485 (HEHRRQPHNGFRPKNKG) show a composition bias toward basic residues.

The protein belongs to the SPATS2 family.

It localises to the cytoplasm. The protein resides in the nucleus. It is found in the nucleolus. In Mus musculus (Mouse), this protein is SPATS2-like protein (Spats2l).